Consider the following 171-residue polypeptide: Protein phosphatase 1 regulatory subunit 1A (171 aa).

Met1 is subject to N-acetylmethionine. A disordered region spans residues 1–171; it reads MEPDNSPRKI…PLDSQGASLV (171 aa). Residues 9–12 form an essential for activity region; that stretch reads KIQF. Over residues 19–29 the composition is skewed to basic and acidic residues; sequence PHLDPEAAEQI. Thr35 bears the Phosphothreonine mark. The segment at 42 to 54 is essential for activity; it reads TSDQSSPEIDEDR. Phosphoserine occurs at positions 43, 46, 47, and 67. The segment covering 122-146 has biased composition (polar residues); the sequence is GSASRPDTPGTAQKSAESNPKTQEQ. The segment at 143-171 is interaction with PPP1R15A; that stretch reads TQEQCGVEPRTEDSSAHMLPLDSQGASLV.

This sequence belongs to the protein phosphatase inhibitor 1 family. Interacts with PPP1R15A. Phosphorylation of Thr-35 is required for activity.

Inhibitor of protein-phosphatase 1. This protein may be important in hormonal control of glycogen metabolism. Hormones that elevate intracellular cAMP increase I-1 activity in many tissues. I-1 activation may impose cAMP control over proteins that are not directly phosphorylated by PKA. Following a rise in intracellular calcium, I-1 is inactivated by calcineurin (or PP2B). Does not inhibit type-2 phosphatases. The polypeptide is Protein phosphatase 1 regulatory subunit 1A (Ppp1r1a) (Mus musculus (Mouse)).